The sequence spans 96 residues: Aspartyl/glutamyl-tRNA(Asn/Gln) amidotransferase subunit C (96 aa).

This sequence belongs to the GatC family. As to quaternary structure, heterotrimer of A, B and C subunits.

It carries out the reaction L-glutamyl-tRNA(Gln) + L-glutamine + ATP + H2O = L-glutaminyl-tRNA(Gln) + L-glutamate + ADP + phosphate + H(+). The catalysed reaction is L-aspartyl-tRNA(Asn) + L-glutamine + ATP + H2O = L-asparaginyl-tRNA(Asn) + L-glutamate + ADP + phosphate + 2 H(+). Allows the formation of correctly charged Asn-tRNA(Asn) or Gln-tRNA(Gln) through the transamidation of misacylated Asp-tRNA(Asn) or Glu-tRNA(Gln) in organisms which lack either or both of asparaginyl-tRNA or glutaminyl-tRNA synthetases. The reaction takes place in the presence of glutamine and ATP through an activated phospho-Asp-tRNA(Asn) or phospho-Glu-tRNA(Gln). The chain is Aspartyl/glutamyl-tRNA(Asn/Gln) amidotransferase subunit C from Neisseria gonorrhoeae (strain ATCC 700825 / FA 1090).